The chain runs to 297 residues: Protein-L-isoaspartate O-methyltransferase (297 aa).

Residues 20–57 (RKPAPARTAGMPAVGAPGPAQAQAKARDKQPSAPTAAA) form a disordered region. Residues 28 to 43 (AGMPAVGAPGPAQAQA) show a composition bias toward low complexity. Ser-133 is an active-site residue.

It belongs to the methyltransferase superfamily. L-isoaspartyl/D-aspartyl protein methyltransferase family.

The protein resides in the cytoplasm. It carries out the reaction [protein]-L-isoaspartate + S-adenosyl-L-methionine = [protein]-L-isoaspartate alpha-methyl ester + S-adenosyl-L-homocysteine. Its function is as follows. Catalyzes the methyl esterification of L-isoaspartyl residues in peptides and proteins that result from spontaneous decomposition of normal L-aspartyl and L-asparaginyl residues. It plays a role in the repair and/or degradation of damaged proteins. This is Protein-L-isoaspartate O-methyltransferase from Cupriavidus pinatubonensis (strain JMP 134 / LMG 1197) (Cupriavidus necator (strain JMP 134)).